A 91-amino-acid chain; its full sequence is Probable Fe(2+)-trafficking protein (91 aa).

Belongs to the Fe(2+)-trafficking protein family.

In terms of biological role, could be a mediator in iron transactions between iron acquisition and iron-requiring processes, such as synthesis and/or repair of Fe-S clusters in biosynthetic enzymes. The polypeptide is Probable Fe(2+)-trafficking protein (Burkholderia mallei (strain NCTC 10247)).